Reading from the N-terminus, the 275-residue chain is Phosphatidylglycerol--prolipoprotein diacylglyceryl transferase (275 aa).

The next 7 helical transmembrane spans lie at 22–42 (LSVR…MWLA), 61–81 (LLFY…VLFY), 96–116 (IWTG…AMIW), 125–145 (FFTV…VGRI), 177–197 (SQLY…NLFW), 204–224 (GAIS…VEFV), and 238–258 (ISMG…MVWA). Arg-144 is an a 1,2-diacyl-sn-glycero-3-phospho-(1'-sn-glycerol) binding site.

Belongs to the Lgt family.

It is found in the cell inner membrane. It carries out the reaction L-cysteinyl-[prolipoprotein] + a 1,2-diacyl-sn-glycero-3-phospho-(1'-sn-glycerol) = an S-1,2-diacyl-sn-glyceryl-L-cysteinyl-[prolipoprotein] + sn-glycerol 1-phosphate + H(+). The protein operates within protein modification; lipoprotein biosynthesis (diacylglyceryl transfer). Its function is as follows. Catalyzes the transfer of the diacylglyceryl group from phosphatidylglycerol to the sulfhydryl group of the N-terminal cysteine of a prolipoprotein, the first step in the formation of mature lipoproteins. The protein is Phosphatidylglycerol--prolipoprotein diacylglyceryl transferase of Aeromonas salmonicida (strain A449).